A 498-amino-acid polypeptide reads, in one-letter code: Pup deamidase/depupylase (498 aa).

Gly6–Glu10 provides a ligand contact to ATP. Residues Glu8 and Tyr93 each coordinate Mg(2+). Asp95 acts as the Proton acceptor in catalysis. A Mg(2+)-binding site is contributed by Glu100. Ser102–Ala103 provides a ligand contact to ATP. Residue His156 participates in Mg(2+) binding. Asn158 and Arg240 together coordinate ATP. Residue His242 coordinates Mg(2+).

It belongs to the Pup ligase/Pup deamidase family. Pup deamidase subfamily. Requires ATP as cofactor.

It carries out the reaction [prokaryotic ubiquitin-like protein]-C-terminal-L-glutamine + H2O = [prokaryotic ubiquitin-like protein]-C-terminal-L-glutamate + NH4(+). It functions in the pathway protein degradation; proteasomal Pup-dependent pathway. In terms of biological role, specifically catalyzes the deamidation of the C-terminal glutamine of the prokaryotic ubiquitin-like protein Pup to glutamate, thereby rendering Pup competent for conjugation. Probably also displays depupylase (DPUP) activity, removing conjugated Pup from target proteins; thus may be involved in the recycling of Pup and may function similarly to deubiquitinases (DUBs) in eukaryotes to prevent or promote proteasomal degradation of certain proteins. The chain is Pup deamidase/depupylase (dop) from Mycolicibacterium smegmatis (strain ATCC 700084 / mc(2)155) (Mycobacterium smegmatis).